Reading from the N-terminus, the 68-residue chain is Protein transport protein Sec61 subunit gamma (68 aa).

The Cytoplasmic segment spans residues 1–32; it reads MDQVMAWVEPGKQFAKDSIRLVKRCTKPDRKE. Residues 33–61 traverse the membrane as a helical segment; the sequence is FQKIAVATAIGFAIMGFIGFFVKLIHIPI. The Extracellular portion of the chain corresponds to 62-68; sequence NNIIVGS.

This sequence belongs to the SecE/SEC61-gamma family. Heterotrimeric complex composed of SEC61-alpha, SEC61-beta and SEC61-gamma. Component of the ribosome-associated ER translocon complex.

The protein localises to the endoplasmic reticulum membrane. Its function is as follows. Necessary for protein translocation in the endoplasmic reticulum and multi-pass membrane protein biogenesis. In Ciona intestinalis (Transparent sea squirt), this protein is Protein transport protein Sec61 subunit gamma (SEC61G).